The following is a 1014-amino-acid chain: SUMO-specific isopeptidase USPL1 (1014 aa).

Disordered regions lie at residues 137-158 (TFTDQQSAPAETISLDKTEEQP) and 275-318 (EEKP…VSDE). Residues 275-289 (EEKPVSLVHTEDQHL) are compositionally biased toward basic and acidic residues. The 282-residue stretch at 355 to 636 (LFWKNEENMC…EFHILFWETD (282 aa)) folds into the USP domain. The Nucleophile role is filled by cysteine 364. Residues 364–631 (CWLDAMLVML…PFPSSEFHIL (268 aa)) form an SUMO-binding region. Catalysis depends on histidine 592, which acts as the Proton acceptor. Disordered regions lie at residues 794 to 823 (HPSFQSTPIRPPPPLPPAPKPKPSLQYDKH) and 844 to 867 (NSQPKQISLPGGLNPSVKKTAGQE). Pro residues predominate over residues 802–815 (IRPPPPLPPAPKPK).

Belongs to the peptidase C19 family.

Its subcellular location is the nucleus. The protein resides in the cajal body. In terms of biological role, SUMO-specific isopeptidase involved in protein desumoylation. Specifically binds SUMO proteins with a higher affinity for sumo2 and sumo3 which it cleaves more efficiently. Also able to process full-length SUMO proteins to their mature forms. Plays a key role in RNA polymerase-II-mediated snRNA transcription in the Cajal bodies. Is a component of complexes that can bind to U snRNA genes. The sequence is that of SUMO-specific isopeptidase USPL1 (uspl1) from Danio rerio (Zebrafish).